Reading from the N-terminus, the 259-residue chain is Dolichol-phosphate mannosyltransferase subunit 1 (259 aa).

The residue at position 2 (alanine 2) is an N-acetylalanine. A Phosphoserine modification is found at serine 3. GDP-alpha-D-mannose-binding residues include proline 31, tyrosine 33, glutamate 35, isoleucine 62, aspartate 64, aspartate 117, alanine 118, aspartate 119, arginine 146, arginine 233, and lysine 239. Position 119 (aspartate 119) interacts with Mg(2+). Aspartate 119 contributes to the Mn(2+) binding site.

Belongs to the glycosyltransferase 2 family. Component of the dolichol-phosphate mannose (DPM) synthase complex composed of DPM1, DPM2 and DPM3; within the complex, directly interacts with DPM3. This interaction may stabilize DPM1. Mg(2+) is required as a cofactor. Mn(2+) serves as cofactor. It depends on Ca(2+) as a cofactor.

The protein resides in the endoplasmic reticulum. It catalyses the reaction a di-trans,poly-cis-dolichyl phosphate + GDP-alpha-D-mannose = a di-trans,poly-cis-dolichyl beta-D-mannosyl phosphate + GDP. The protein operates within protein modification; protein glycosylation. Its function is as follows. Transfers mannose from GDP-mannose to dolichol monophosphate to form dolichol phosphate mannose (Dol-P-Man) which is the mannosyl donor in pathways leading to N-glycosylation, glycosyl phosphatidylinositol membrane anchoring, and O-mannosylation of proteins; catalytic subunit of the dolichol-phosphate mannose (DPM) synthase complex. This is Dolichol-phosphate mannosyltransferase subunit 1 (DPM1) from Sus scrofa (Pig).